Here is a 318-residue protein sequence, read N- to C-terminus: L-lactate dehydrogenase (318 aa).

The NAD(+) site is built by valine 16, aspartate 37, and tyrosine 69. Substrate is bound by residues glutamine 86, arginine 92, and 124-127 (NPVD). Residues 122–124 (ASN) and serine 147 each bind NAD(+). 152–155 (DSAR) is a binding site for substrate. Residue histidine 179 is the Proton acceptor of the active site. At tyrosine 223 the chain carries Phosphotyrosine. Threonine 232 serves as a coordination point for substrate.

Belongs to the LDH/MDH superfamily. LDH family. In terms of assembly, homotetramer.

Its subcellular location is the cytoplasm. It catalyses the reaction (S)-lactate + NAD(+) = pyruvate + NADH + H(+). The protein operates within fermentation; pyruvate fermentation to lactate; (S)-lactate from pyruvate: step 1/1. Its function is as follows. Catalyzes the conversion of lactate to pyruvate. The sequence is that of L-lactate dehydrogenase from Mycoplasma mycoides subsp. mycoides SC (strain CCUG 32753 / NCTC 10114 / PG1).